The primary structure comprises 1379 residues: Partitioning defective protein 3 (1379 aa).

Residues 1–23 (MSASSTSSSSTSCPEGGEPSGSC) are compositionally biased toward low complexity. 2 disordered regions span residues 1–32 (MSASSTSSSSTSCPEGGEPSGSCKSSDEGEST) and 208–335 (YNVG…SDRK). 2 stretches are compositionally biased toward polar residues: residues 239-256 (SFDQIPQSGLRVSTPKPS) and 272-284 (ILRSSLRTEASGS). Composition is skewed to basic and acidic residues over residues 302–315 (EVEKKLAEQDERKS) and 322–335 (DKNPGRFARGSDRK). PDZ domains are found at residues 381 to 483 (LVTF…IINR) and 515 to 599 (VVEL…SRVS). Residues 606–626 (TSASSENKENEETLKVVEEEK) are a coiled coil. The region spanning 659-750 (VIPFINGSSS…EVGMISSNVR (92 aa)) is the PDZ 3 domain. Disordered stretches follow at residues 767–873 (DLSR…MGAA), 887–918 (HQRQNSAPTSSTQKRSKSQPRSSSQRNYRSPM), 949–1085 (QSME…GGNV), 1273–1301 (VEPVSGSSASATDRRGRSTSSGAVASGSS), and 1350–1379 (AYETRGGGAGGSPSQYRRRDQGPPHRFPQY). 2 stretches are compositionally biased toward low complexity: residues 776–786 (SSPSPSSRMSS) and 798–826 (ATRGTSSSGADSSHSRQSSASSAVPAVPA). 2 stretches are compositionally biased toward basic and acidic residues: residues 828 to 844 (LTERDSIVSDGTSRNDE) and 854 to 869 (FNREGLGRKSLSEKRG). Over residues 894–912 (PTSSTQKRSKSQPRSSSQR) the composition is skewed to low complexity. Over residues 967–977 (QIPTGSSSKVQ) the composition is skewed to polar residues. 2 stretches are compositionally biased toward basic and acidic residues: residues 1030-1040 (KSRDASPEKTP) and 1048-1060 (SVERPKSIIDERN). Positions 1290 to 1301 (STSSGAVASGSS) are enriched in low complexity.

The protein belongs to the PAR3 family. As to quaternary structure, required, together with pkc-3, for the localization of par-6; par-6 is involved in localizing/maintaining par-3 at the cell periphery. Interacts with par-6 and pkc-3 for localization at the periphery of anterior cortex of the embryo. In terms of tissue distribution, asymmetrically distributed at the periphery of the zygote and in dividing blastomeres of the germline lineage. Coexpressed with par-6; patchy expression observed at the periphery after completion of meiosis I and in meiosis II. On completion of metaphase II, expression is restricted to the anterior 85% of embryo length; this decreases to 55% in embryos between prophase and telophase of the first mitosis. During the first cleavage, expression is detected in the advancing furrow. Transiently coexpressed and colocalized asymmetrically with par-6 and pkc-3, in the developing somatic gonad, including the spermathecal precursor cells of L4 larvae.

The protein resides in the cytoplasm. In terms of biological role, in cooperation with pkc-3, required for establishing cell polarity and regulating spindle orientation in the early embryo. Localization is crucial for recruiting par-6 and pkc-3 to the peripheral apical cortex and restricting par-2 to basolateral surfaces. Necessary for apicobasal and anterior-posterior asymmetries associated with cell adhesion and gastrulation during the first few cycles of embryogenesis, and also for epithelial cell polarity in the distal spermatheca. Regulates the asymmetric localization of csnk-1, ppk-1 and gpr-1/2 during the first embryonic division. This is Partitioning defective protein 3 from Caenorhabditis elegans.